Here is a 395-residue protein sequence, read N- to C-terminus: Gastric triacylglycerol lipase (395 aa).

An N-terminal signal peptide occupies residues 1-18 (MWLLLITSVISTFGGAHG). N-linked (GlcNAc...) asparagine glycans are attached at residues N33, N68, and N98. One can recognise an AB hydrolase-1 domain in the interval 77–376 (PVVYLQHGLI…LAYNHLDFIW (300 aa)). The active-site Nucleophile is S171. A disulfide bridge links C245 with C254. N270 carries an N-linked (GlcNAc...) asparagine glycan. Catalysis depends on charge relay system residues D342 and H371.

The protein belongs to the AB hydrolase superfamily. Lipase family. Secreted by the serous (von Ebner's) glands at the back of the rat tongue.

The protein localises to the secreted. The enzyme catalyses a triacylglycerol + H2O = a diacylglycerol + a fatty acid + H(+). The catalysed reaction is 1,2,3-tri-(9Z-octadecenoyl)-glycerol + H2O = 1,2-di-(9Z-octadecenoyl)-sn-glycerol + (9Z)-octadecenoate + H(+). It carries out the reaction 1,2,3-trioctanoylglycerol + H2O = 1,2-dioctanoyl-sn-glycerol + octanoate + H(+). Catalyzes the hydrolysis of triacylglycerols to yield free fatty acids, diacylglycerol, monoacylglycerol, and glycerol. Shows a preferential hydrolysis at the sn-3 position of triacylglycerol. This Rattus norvegicus (Rat) protein is Gastric triacylglycerol lipase (Lipf).